A 78-amino-acid polypeptide reads, in one-letter code: Beta sliding clamp (78 aa).

It belongs to the beta sliding clamp family. In terms of assembly, forms a ring-shaped head-to-tail homodimer around DNA which binds and tethers DNA polymerases and other proteins to the DNA. The DNA replisome complex has a single clamp-loading complex (3 tau and 1 each of delta, delta', psi and chi subunits) which binds 3 Pol III cores (1 core on the leading strand and 2 on the lagging strand) each with a beta sliding clamp dimer. Additional proteins in the replisome are other copies of gamma, psi and chi, Ssb, DNA helicase and RNA primase.

The protein localises to the cytoplasm. Confers DNA tethering and processivity to DNA polymerases and other proteins. Acts as a clamp, forming a ring around DNA (a reaction catalyzed by the clamp-loading complex) which diffuses in an ATP-independent manner freely and bidirectionally along dsDNA. Initially characterized for its ability to contact the catalytic subunit of DNA polymerase III (Pol III), a complex, multichain enzyme responsible for most of the replicative synthesis in bacteria; Pol III exhibits 3'-5' exonuclease proofreading activity. The beta chain is required for initiation of replication as well as for processivity of DNA replication. This is Beta sliding clamp (dnaN) from Serratia marcescens.